The sequence spans 278 residues: Dermonecrotic toxin LhSicTox-alphaIV1ii (278 aa).

The active site involves histidine 5. The Mg(2+) site is built by glutamate 25 and aspartate 27. Catalysis depends on histidine 41, which acts as the Nucleophile. Intrachain disulfides connect cysteine 45–cysteine 51 and cysteine 47–cysteine 192. Residue aspartate 85 participates in Mg(2+) binding.

This sequence belongs to the arthropod phospholipase D family. Class II subfamily. The cofactor is Mg(2+). In terms of tissue distribution, expressed by the venom gland.

The protein resides in the secreted. It carries out the reaction an N-(acyl)-sphingosylphosphocholine = an N-(acyl)-sphingosyl-1,3-cyclic phosphate + choline. The catalysed reaction is an N-(acyl)-sphingosylphosphoethanolamine = an N-(acyl)-sphingosyl-1,3-cyclic phosphate + ethanolamine. The enzyme catalyses a 1-acyl-sn-glycero-3-phosphocholine = a 1-acyl-sn-glycero-2,3-cyclic phosphate + choline. It catalyses the reaction a 1-acyl-sn-glycero-3-phosphoethanolamine = a 1-acyl-sn-glycero-2,3-cyclic phosphate + ethanolamine. Dermonecrotic toxins cleave the phosphodiester linkage between the phosphate and headgroup of certain phospholipids (sphingolipid and lysolipid substrates), forming an alcohol (often choline) and a cyclic phosphate. This toxin acts on sphingomyelin (SM). It may also act on ceramide phosphoethanolamine (CPE), lysophosphatidylcholine (LPC) and lysophosphatidylethanolamine (LPE), but not on lysophosphatidylserine (LPS), and lysophosphatidylglycerol (LPG). It acts by transphosphatidylation, releasing exclusively cyclic phosphate products as second products. Induces dermonecrosis, hemolysis, increased vascular permeability, edema, inflammatory response, and platelet aggregation. The chain is Dermonecrotic toxin LhSicTox-alphaIV1ii from Loxosceles hirsuta (Recluse spider).